The primary structure comprises 792 residues: Phenylalanine--tRNA ligase beta subunit (792 aa).

The tRNA-binding domain occupies 39–154 (LYSFASVITA…EATPLGEDLA (116 aa)). Residues 403–480 (RELKEVALRP…ESWNIETQNP (78 aa)) form the B5 domain. Asp-456, Asp-462, Glu-465, and Glu-466 together coordinate Mg(2+). The region spanning 695–791 (AIYPSSFRDL…LLTDTKGTIN (97 aa)) is the FDX-ACB domain.

This sequence belongs to the phenylalanyl-tRNA synthetase beta subunit family. Type 1 subfamily. Tetramer of two alpha and two beta subunits. Mg(2+) serves as cofactor.

The protein resides in the cytoplasm. It catalyses the reaction tRNA(Phe) + L-phenylalanine + ATP = L-phenylalanyl-tRNA(Phe) + AMP + diphosphate + H(+). The protein is Phenylalanine--tRNA ligase beta subunit (pheT) of Chlamydia pneumoniae (Chlamydophila pneumoniae).